Here is a 280-residue protein sequence, read N- to C-terminus: Ribosomal RNA small subunit methyltransferase A (280 aa).

S-adenosyl-L-methionine contacts are provided by Asn-28, Leu-30, Gly-55, Glu-77, Asp-103, and Asn-122.

This sequence belongs to the class I-like SAM-binding methyltransferase superfamily. rRNA adenine N(6)-methyltransferase family. RsmA subfamily.

The protein resides in the cytoplasm. The catalysed reaction is adenosine(1518)/adenosine(1519) in 16S rRNA + 4 S-adenosyl-L-methionine = N(6)-dimethyladenosine(1518)/N(6)-dimethyladenosine(1519) in 16S rRNA + 4 S-adenosyl-L-homocysteine + 4 H(+). Specifically dimethylates two adjacent adenosines (A1518 and A1519) in the loop of a conserved hairpin near the 3'-end of 16S rRNA in the 30S particle. May play a critical role in biogenesis of 30S subunits. The chain is Ribosomal RNA small subunit methyltransferase A from Ruegeria sp. (strain TM1040) (Silicibacter sp.).